We begin with the raw amino-acid sequence, 141 residues long: HTH-type transcriptional regulator ZntR (141 aa).

The HTH merR-type domain maps to 1 to 70 (MYRIGELAKM…LESIRELLSI (70 aa)). Residues 4–23 (IGELAKMAEVTPDTIRYYEK) constitute a DNA-binding region (H-T-H motif). The Zn(2+) site is built by C114, C115, H119, and C124.

Homodimer.

Its function is as follows. Zinc-responsive transcriptional regulator of zntA. The sequence is that of HTH-type transcriptional regulator ZntR (zntR) from Escherichia coli O157:H7.